The chain runs to 537 residues: Lysosomal cobalamin transport escort protein LMBD1 (537 aa).

Residues 1–7 (MAAAAAE) are Extracellular-facing. Residues 8–28 (LVIGWCIFGLLLLAILAFCWV) form a helical membrane-spanning segment. Topologically, residues 29–47 (YVRKYQSQRESEVVSTVTA) are cytoplasmic. Residues 48-68 (IFSLAVALITSALLPVDIFLV) form a helical membrane-spanning segment. The Extracellular portion of the chain corresponds to 69–97 (SYMKNQNGTFKDWADANVTVQIENTVLYG). 2 N-linked (GlcNAc...) asparagine glycosylation sites follow: N75 and N85. Residues 98–118 (YYTLYSVILFCVFFWIPFVYF) form a helical membrane-spanning segment. At 119 to 141 (YYEEKDEDDASKCTQIKTALKYT) the chain is on the cytoplasmic side. Residues 142-162 (LGFVVICALLLLVGAFVPLHL) form a helical membrane-spanning segment. Topologically, residues 163 to 185 (PNNNNSTEWEKVKLLFEDLGTGQ) are extracellular. N-linked (GlcNAc...) asparagine glycans are attached at residues N166 and N167. The chain crosses the membrane as a helical span at residues 186 to 206 (GLAALSFSISSLTLIGMLAAI). The Cytoplasmic portion of the chain corresponds to 207–302 (TYTAYGMSAL…KFCGALRPLK (96 aa)). Positions 229 to 232 (YERL) match the YERL motif; mediates interaction with adapter protein complex 2 and is essential for its function in clathrin-mediated endocytosis of INSR motif. Residue T235 is modified to Phosphothreonine. Residues 291-294 (WTKF) carry the WTKF motif; mediates interaction with adapter protein complex 2 and is essential for its function in clathrin-mediated endocytosis of INSR motif. A helical membrane pass occupies residues 303-323 (IIWGIFFILVALLFVISLFLS). The Extracellular portion of the chain corresponds to 324-361 (NLDKALHSAGIDSGFIIFGTNLSNPLNMLLPLLQTVFP). N344 is a glycosylation site (N-linked (GlcNAc...) asparagine). A helical membrane pass occupies residues 362–382 (LDYILITIIIMYFIFTSMAGI). At 383 to 405 (RNIGIWFFWIRLYKIRRGRTRPQ) the chain is on the cytoplasmic side. A helical transmembrane segment spans residues 406-426 (ALLFLCMILLLIVLHTSYMIY). At 427 to 483 (SLAPQYVMYGSQNYLIESNITSDAHKGNSTLAVPKRCDADAPKDQCTVTRTYIFLHK) the chain is on the extracellular side. N-linked (GlcNAc...) asparagine glycans are attached at residues N445 and N454. The chain crosses the membrane as a helical span at residues 484–504 (FWFFSAAYYFGNWAFLVVFLI). At 505–537 (GLIVSCCKGKKSVIEGVDEDSDLSDDEPSAYSA) the chain is on the cytoplasmic side. A phosphoserine mark is found at S525 and S528.

Belongs to the LIMR family. LMBRD1 subfamily. Interacts with ABCD4; this interaction induces the translocation of ABCD4 from the endoplasmic reticulum to the lysosome. Interacts with ABCD4 and MMACHC; this interaction ensures the transport of cobalamin from the lysosome to the cytoplasm. Interacts with INSR, adapter protein complex 2 and clathrin heavy chain. In terms of processing, N-glycosylated.

It localises to the endoplasmic reticulum membrane. The protein resides in the lysosome membrane. The protein localises to the cell membrane. Its subcellular location is the cytoplasmic vesicle. It is found in the clathrin-coated vesicle. Functionally, lysosomal membrane chaperone required to export cobalamin (vitamin B12) from the lysosome to the cytosol, allowing its conversion to cofactors. Targets ABCD4 transporter from the endoplasmic reticulum to the lysosome. Then forms a complex with lysosomal ABCD4 and cytoplasmic MMACHC to transport cobalamin across the lysosomal membrane. Acts as an adapter protein which plays an important role in mediating and regulating the internalization of the insulin receptor (INSR). Involved in clathrin-mediated endocytosis of INSR via its interaction with adapter protein complex 2. Essential for the initiation of gastrulation and early formation of mesoderm structures during embryogenesis. The sequence is that of Lysosomal cobalamin transport escort protein LMBD1 from Mus musculus (Mouse).